Consider the following 416-residue polypeptide: D-amino acid dehydrogenase (416 aa).

FAD is bound at residue 3-17 (ITILGSGVIGVTTAY).

It belongs to the DadA oxidoreductase family. Requires FAD as cofactor.

The catalysed reaction is a D-alpha-amino acid + A + H2O = a 2-oxocarboxylate + AH2 + NH4(+). Functionally, oxidative deamination of D-amino acids. The chain is D-amino acid dehydrogenase from Brucella suis biovar 1 (strain 1330).